The primary structure comprises 359 residues: MKVLAAMSGGVDSAVAAARAVDMGHDVVGVHLALSRSASGKRGCCTPRDAQDAAQAAQAIGIPFYVWDFSEEFQEKVIDNFISEYSAGRTPNPCLRCNEHIKFSSLLRRALALGFDAVCTGHYARVFLDEDGTYQLHRASSWAKDQSYVLAVLQQAQLKHCYFPLGATPSKKLVRQEADERGLKVSKKPDSHDVCFIPSSNTGAWLSQRIGRRDGDIIDDLGQRVGSHTGAFAYTVGQRKGLRLSSPAWDGKPRYVLDIEPISNTVVVGPRESLRVDELSGAFTTTGWCFTSRPIECSVQVRAHSDPVSAIAFIRDDVLVVRPDEPVFAVAKGQSAAIYRGTRVLGQLMIDNTKKYASS.

Residues 6–13 and Leu32 each bind ATP; that span reads AMSGGVDS. Catalysis depends on Cys97, which acts as the Nucleophile. Cys97 and Cys195 are disulfide-bonded. Gly121 contacts ATP. Residues 144–146 are interaction with tRNA; the sequence is KDQ. Cys195 serves as the catalytic Cysteine persulfide intermediate.

Belongs to the MnmA/TRMU family.

It localises to the cytoplasm. The catalysed reaction is S-sulfanyl-L-cysteinyl-[protein] + uridine(34) in tRNA + AH2 + ATP = 2-thiouridine(34) in tRNA + L-cysteinyl-[protein] + A + AMP + diphosphate + H(+). Catalyzes the 2-thiolation of uridine at the wobble position (U34) of tRNA, leading to the formation of s(2)U34. The sequence is that of tRNA-specific 2-thiouridylase MnmA from Tropheryma whipplei (strain Twist) (Whipple's bacillus).